The chain runs to 207 residues: Microtubule-associated protein Jupiter (207 aa).

Phosphoserine is present on serine 30. Threonine 41 and threonine 102 each carry phosphothreonine. Phosphoserine occurs at positions 111, 138, and 149. 2 disordered regions span residues 129 to 174 (KGKY…YKAG) and 188 to 207 (GNQV…SGLW). The segment covering 136–149 (SGSVSSASSSVSSS) has biased composition (low complexity). The span at 150–164 (TENLKINVGNRSDGN) shows a compositional bias: polar residues.

Belongs to the MAP Jupiter family.

The protein resides in the nucleus. It is found in the cytoplasm. It localises to the cytoskeleton. The protein localises to the spindle. Functionally, binds to all microtubule populations. The chain is Microtubule-associated protein Jupiter from Drosophila grimshawi (Hawaiian fruit fly).